The sequence spans 493 residues: Probable cytosol aminopeptidase (493 aa).

Residues Lys-260 and Asp-265 each contribute to the Mn(2+) site. Lys-272 is a catalytic residue. Positions 283, 342, and 344 each coordinate Mn(2+). The active site involves Arg-346.

This sequence belongs to the peptidase M17 family. The cofactor is Mn(2+).

Its subcellular location is the cytoplasm. The catalysed reaction is Release of an N-terminal amino acid, Xaa-|-Yaa-, in which Xaa is preferably Leu, but may be other amino acids including Pro although not Arg or Lys, and Yaa may be Pro. Amino acid amides and methyl esters are also readily hydrolyzed, but rates on arylamides are exceedingly low.. It carries out the reaction Release of an N-terminal amino acid, preferentially leucine, but not glutamic or aspartic acids.. Functionally, presumably involved in the processing and regular turnover of intracellular proteins. Catalyzes the removal of unsubstituted N-terminal amino acids from various peptides. The chain is Probable cytosol aminopeptidase from Clostridium perfringens (strain 13 / Type A).